Consider the following 500-residue polypeptide: Histidine ammonia-lyase (500 aa).

Residues 141-143 constitute a cross-link (5-imidazolinone (Ala-Gly)); sequence ASG. The residue at position 142 (Ser-142) is a 2,3-didehydroalanine (Ser).

It belongs to the PAL/histidase family. Post-translationally, contains an active site 4-methylidene-imidazol-5-one (MIO), which is formed autocatalytically by cyclization and dehydration of residues Ala-Ser-Gly.

It is found in the cytoplasm. The catalysed reaction is L-histidine = trans-urocanate + NH4(+). It functions in the pathway amino-acid degradation; L-histidine degradation into L-glutamate; N-formimidoyl-L-glutamate from L-histidine: step 1/3. This chain is Histidine ammonia-lyase, found in Shouchella clausii (strain KSM-K16) (Alkalihalobacillus clausii).